A 320-amino-acid chain; its full sequence is Dermonecrotic toxin LarSicTox-alphaIB2a (320 aa).

The first 15 residues, 1–15, serve as a signal peptide directing secretion; it reads MSHSSTALLHPYVAA. Positions 16-41 are excised as a propeptide; sequence RATEKFAPIYFFCHPLQSAETDVAER. His52 is a catalytic residue. Residues Glu72 and Asp74 each coordinate Mg(2+). His88 (nucleophile) is an active-site residue. Cystine bridges form between Cys92-Cys98 and Cys94-Cys237. Mg(2+) is bound at residue Asp132. An N-linked (GlcNAc...) asparagine glycan is attached at Asn297.

Belongs to the arthropod phospholipase D family. Class II subfamily. Mg(2+) is required as a cofactor. As to expression, expressed by the venom gland.

The protein resides in the secreted. It carries out the reaction an N-(acyl)-sphingosylphosphocholine = an N-(acyl)-sphingosyl-1,3-cyclic phosphate + choline. The enzyme catalyses an N-(acyl)-sphingosylphosphoethanolamine = an N-(acyl)-sphingosyl-1,3-cyclic phosphate + ethanolamine. It catalyses the reaction a 1-acyl-sn-glycero-3-phosphocholine = a 1-acyl-sn-glycero-2,3-cyclic phosphate + choline. The catalysed reaction is a 1-acyl-sn-glycero-3-phosphoethanolamine = a 1-acyl-sn-glycero-2,3-cyclic phosphate + ethanolamine. Its function is as follows. Dermonecrotic toxins cleave the phosphodiester linkage between the phosphate and headgroup of certain phospholipids (sphingolipid and lysolipid substrates), forming an alcohol (often choline) and a cyclic phosphate. This toxin acts on sphingomyelin (SM). It may also act on ceramide phosphoethanolamine (CPE), lysophosphatidylcholine (LPC) and lysophosphatidylethanolamine (LPE), but not on lysophosphatidylserine (LPS), and lysophosphatidylglycerol (LPG). It acts by transphosphatidylation, releasing exclusively cyclic phosphate products as second products. Induces dermonecrosis, hemolysis, increased vascular permeability, edema, inflammatory response, and platelet aggregation. This chain is Dermonecrotic toxin LarSicTox-alphaIB2a, found in Loxosceles arizonica (Arizona brown spider).